Reading from the N-terminus, the 116-residue chain is Promotilin (116 aa).

A signal peptide spans 1–25 (MVSRKAVAVLLMVHVAVMLASQTEA). The disordered stretch occupies residues 39–74 (REKERNKGQKKSLIVQQRSEEVGPLDPVEPPEEEEN).

The protein belongs to the motilin family.

It is found in the secreted. In terms of biological role, plays an important role in the regulation of interdigestive gastrointestinal motility and indirectly causes rhythmic contraction of duodenal and colonic smooth muscle. This chain is Promotilin (MLN), found in Felis catus (Cat).